Consider the following 502-residue polypeptide: Maturase K (502 aa).

This sequence belongs to the intron maturase 2 family. MatK subfamily.

The protein resides in the plastid. It localises to the chloroplast. Functionally, usually encoded in the trnK tRNA gene intron. Probably assists in splicing its own and other chloroplast group II introns. This is Maturase K from Sisymbrium irio (London rocket).